The primary structure comprises 242 residues: Large ribosomal subunit protein uL1 (242 aa).

It belongs to the universal ribosomal protein uL1 family. As to quaternary structure, part of the 50S ribosomal subunit.

Functionally, binds directly to 23S rRNA. The L1 stalk is quite mobile in the ribosome, and is involved in E site tRNA release. Its function is as follows. Protein L1 is also a translational repressor protein, it controls the translation of the L11 operon by binding to its mRNA. The protein is Large ribosomal subunit protein uL1 of Kitasatospora aureofaciens (Streptomyces aureofaciens).